The following is a 139-amino-acid chain: MALSMSLSSDILSGAPTAGRGGGCSAALSPRGRGSKGLGTRAPGPRGDGQQPPLGTGGDEDPGAGSASAGGSRLAAAAAAEAAAPGDRSLCWAPRGRLLASSPAGEAGSWGRARRGGPRPGAPCKGLAGPPLRPGLARS.

The segment covering 1 to 11 (MALSMSLSSDI) has biased composition (polar residues). Disordered stretches follow at residues 1–80 (MALS…AAAA) and 100–139 (ASSP…LARS). Positions 63–80 (GAGSASAGGSRLAAAAAA) are enriched in low complexity.

This is an uncharacterized protein from Homo sapiens (Human).